The sequence spans 2372 residues: NBAS subunit of NRZ tethering complex (2372 aa).

2 WD repeats span residues 119-158 and 304-343; these read DPNP…LFII and GEQD…LRGS. The segment at 447-468 is disordered; the sequence is LESSVKGEEDDGDDDSDSDEEA. Residues 454–467 are compositionally biased toward acidic residues; the sequence is EEDDGDDDSDSDEE. Residues 629–668 are a coiled coil; that stretch reads YEDFLSMEEELEQRKERESKKRQELLKKVDFSKLTLEQKE.

Its subcellular location is the endoplasmic reticulum. In terms of biological role, involved in Golgi-to-endoplasmic reticulum (ER) retrograde transport; the function is proposed to depend on its association in the NRZ complex which is believed to play a role in SNARE assembly at the ER. Required for normal embryonic development. May play a role in the nonsense-mediated decay pathway of mRNAs containing premature stop codons. The chain is NBAS subunit of NRZ tethering complex from Danio rerio (Zebrafish).